We begin with the raw amino-acid sequence, 359 residues long: Transcription factor MYB115 (359 aa).

The span at 1–17 (MYHQNLISSTPNQNSNP) shows a compositional bias: polar residues. The tract at residues 1–21 (MYHQNLISSTPNQNSNPHDWD) is disordered. 2 consecutive HTH myb-type domains span residues 153–208 (KDII…RPNI) and 209–259 (KKND…RRLH). DNA-binding regions (H-T-H motif) lie at residues 181 to 204 (WTSI…HNHL) and 232 to 255 (WTEI…NATK).

In terms of tissue distribution, accumulates in reproductive organs (e.g. flowers and siliques). Expressed at very low levels in vegetative organs.

Its subcellular location is the nucleus. In terms of biological role, transcription activator that recognizes the motif 5'-TAACGG-3' in the promoter of target genes. Promotes vegetative-to-embryonic transition and the formation of somatic embryos from root explants in a WUS-independent manner. Together with MYB118, activates the transcription of S-ACP-DES2/AAD2 and S-ACP-DES3/AAD3 thus promoting the biosynthesis of omega-7 monounsaturated fatty acid in seed endosperm. This Arabidopsis thaliana (Mouse-ear cress) protein is Transcription factor MYB115.